The chain runs to 298 residues: Protease HtpX homolog (298 aa).

A run of 2 helical transmembrane segments spans residues 14 to 34 (VVLL…AGYL) and 39 to 59 (YAMG…SMIF). H143 provides a ligand contact to Zn(2+). The active site involves E144. Zn(2+) is bound at residue H147. Transmembrane regions (helical) follow at residues 158–178 (IAVA…RMLW) and 197–217 (IITL…ASLI). E226 serves as a coordination point for Zn(2+).

Belongs to the peptidase M48B family. Zn(2+) serves as cofactor.

The protein resides in the cell membrane. The polypeptide is Protease HtpX homolog (Streptococcus pyogenes serotype M49 (strain NZ131)).